The primary structure comprises 823 residues: Spindle pole body component SPC97 (823 aa).

This sequence belongs to the TUBGCP family. In terms of assembly, interacts with TUB4, SPC72 and SPC98.

The protein resides in the nucleus. The protein localises to the cytoplasm. Its subcellular location is the cytoskeleton. It localises to the microtubule organizing center. It is found in the spindle pole body. Involved in microtubule organization by the microtubule organizing center, the spindle pole body (SPB). Probably part of the microtubule attachment site at the SPB. This Saccharomyces cerevisiae (strain ATCC 204508 / S288c) (Baker's yeast) protein is Spindle pole body component SPC97 (SPC97).